Reading from the N-terminus, the 119-residue chain is NAD(P)H-quinone oxidoreductase subunit M (119 aa).

It belongs to the complex I NdhM subunit family. In terms of assembly, NDH-1 can be composed of about 15 different subunits; different subcomplexes with different compositions have been identified which probably have different functions.

It localises to the cellular thylakoid membrane. The catalysed reaction is a plastoquinone + NADH + (n+1) H(+)(in) = a plastoquinol + NAD(+) + n H(+)(out). The enzyme catalyses a plastoquinone + NADPH + (n+1) H(+)(in) = a plastoquinol + NADP(+) + n H(+)(out). Functionally, NDH-1 shuttles electrons from an unknown electron donor, via FMN and iron-sulfur (Fe-S) centers, to quinones in the respiratory and/or the photosynthetic chain. The immediate electron acceptor for the enzyme in this species is believed to be plastoquinone. Couples the redox reaction to proton translocation, and thus conserves the redox energy in a proton gradient. Cyanobacterial NDH-1 also plays a role in inorganic carbon-concentration. The polypeptide is NAD(P)H-quinone oxidoreductase subunit M (Gloeothece citriformis (strain PCC 7424) (Cyanothece sp. (strain PCC 7424))).